The sequence spans 81 residues: Apolipoprotein C-I, acidic form (81 aa).

An N-terminal signal peptide occupies residues 1 to 24 (MRLFLSLLVVVLSIVLEGPTPAQG).

This sequence belongs to the apolipoprotein C1 family.

Its subcellular location is the secreted. The chain is Apolipoprotein C-I, acidic form (APOC1A) from Theropithecus gelada (Gelada baboon).